Reading from the N-terminus, the 320-residue chain is Lipoyl synthase (320 aa).

The segment covering 1 to 29 (MIGKLVRDLKIPDQRHPEKAHRPDNDQPR) has biased composition (basic and acidic residues). Residues 1–32 (MIGKLVRDLKIPDQRHPEKAHRPDNDQPRKPS) form a disordered region. Positions 60, 65, 71, 86, 90, 93, and 300 each coordinate [4Fe-4S] cluster. In terms of domain architecture, Radical SAM core spans 71-289 (CWGQGHATMM…EKAAYGKGFL (219 aa)).

This sequence belongs to the radical SAM superfamily. Lipoyl synthase family. [4Fe-4S] cluster is required as a cofactor.

The protein resides in the cytoplasm. It catalyses the reaction [[Fe-S] cluster scaffold protein carrying a second [4Fe-4S](2+) cluster] + N(6)-octanoyl-L-lysyl-[protein] + 2 oxidized [2Fe-2S]-[ferredoxin] + 2 S-adenosyl-L-methionine + 4 H(+) = [[Fe-S] cluster scaffold protein] + N(6)-[(R)-dihydrolipoyl]-L-lysyl-[protein] + 4 Fe(3+) + 2 hydrogen sulfide + 2 5'-deoxyadenosine + 2 L-methionine + 2 reduced [2Fe-2S]-[ferredoxin]. Its pathway is protein modification; protein lipoylation via endogenous pathway; protein N(6)-(lipoyl)lysine from octanoyl-[acyl-carrier-protein]: step 2/2. Functionally, catalyzes the radical-mediated insertion of two sulfur atoms into the C-6 and C-8 positions of the octanoyl moiety bound to the lipoyl domains of lipoate-dependent enzymes, thereby converting the octanoylated domains into lipoylated derivatives. In Cereibacter sphaeroides (strain ATCC 17025 / ATH 2.4.3) (Rhodobacter sphaeroides), this protein is Lipoyl synthase.